We begin with the raw amino-acid sequence, 722 residues long: Golgin subfamily A member 5 (722 aa).

The Cytoplasmic segment spans residues M1 to R689. Disordered regions lie at residues T90–I158 and T194–L215. Residues R91–S109 show a composition bias toward low complexity. Over residues D134 to S148 the composition is skewed to basic and acidic residues. Positions A149–I158 are enriched in polar residues. Positions L195–D209 are enriched in low complexity. A coiled-coil region spans residues K211–G622. Residues V690 to Y710 form a helical; Anchor for type IV membrane protein membrane-spanning segment. Topologically, residues T711–K722 are lumenal.

The protein resides in the golgi apparatus membrane. Its function is as follows. Involved in maintaining Golgi structure. Stimulates the formation of Golgi stacks and ribbons. Involved in intra-Golgi retrograde transport. In Xenopus laevis (African clawed frog), this protein is Golgin subfamily A member 5 (golga5).